A 174-amino-acid chain; its full sequence is Crossover junction endodeoxyribonuclease RuvC (174 aa).

Residues aspartate 8, glutamate 69, and aspartate 141 contribute to the active site. Mg(2+) contacts are provided by aspartate 8, glutamate 69, and aspartate 141.

Belongs to the RuvC family. In terms of assembly, homodimer which binds Holliday junction (HJ) DNA. The HJ becomes 2-fold symmetrical on binding to RuvC with unstacked arms; it has a different conformation from HJ DNA in complex with RuvA. In the full resolvosome a probable DNA-RuvA(4)-RuvB(12)-RuvC(2) complex forms which resolves the HJ. The cofactor is Mg(2+).

Its subcellular location is the cytoplasm. It catalyses the reaction Endonucleolytic cleavage at a junction such as a reciprocal single-stranded crossover between two homologous DNA duplexes (Holliday junction).. Functionally, the RuvA-RuvB-RuvC complex processes Holliday junction (HJ) DNA during genetic recombination and DNA repair. Endonuclease that resolves HJ intermediates. Cleaves cruciform DNA by making single-stranded nicks across the HJ at symmetrical positions within the homologous arms, yielding a 5'-phosphate and a 3'-hydroxyl group; requires a central core of homology in the junction. The consensus cleavage sequence is 5'-(A/T)TT(C/G)-3'. Cleavage occurs on the 3'-side of the TT dinucleotide at the point of strand exchange. HJ branch migration catalyzed by RuvA-RuvB allows RuvC to scan DNA until it finds its consensus sequence, where it cleaves and resolves the cruciform DNA. The chain is Crossover junction endodeoxyribonuclease RuvC from Xanthomonas oryzae pv. oryzae (strain PXO99A).